Here is a 345-residue protein sequence, read N- to C-terminus: MIDNKRGSSYLNSLPEGLSAEECDRYSAVVSLCWNVLGELQDVEFKWHEPLAYHTTFRVGGPAACLARPRSESALLALLERVRENSVPYVVLGGGSNVLVTDGPIPALVIQLIHVAAGLAFNKGRSSSRPLVVVGAGVPISRLLRFCVRNELGGLECLVGIPGSVGGAVVMNAGTAEGTIAEALEWLDALDGAGQRQLVFKADLPAGYRSMGLPEAWLILGGAFRLHVSSGRSLKREMRSLMVRRKATQPLGRPSAGCVFKNPVEAPAGALIERAGLKGFRMGNAQVSDKHANWIINLGSARARDILALISLVENEVFGKFGVRLEREIRILSPEKNSLNQMLNS.

Residues 59–254 enclose the FAD-binding PCMH-type domain; the sequence is VGGPAACLAR…RKATQPLGRP (196 aa). Arg-209 is an active-site residue. Residue Cys-258 is the Proton donor of the active site. Residue Glu-328 is part of the active site.

It belongs to the MurB family. It depends on FAD as a cofactor.

Its subcellular location is the cytoplasm. The enzyme catalyses UDP-N-acetyl-alpha-D-muramate + NADP(+) = UDP-N-acetyl-3-O-(1-carboxyvinyl)-alpha-D-glucosamine + NADPH + H(+). It functions in the pathway cell wall biogenesis; peptidoglycan biosynthesis. Functionally, cell wall formation. The sequence is that of UDP-N-acetylenolpyruvoylglucosamine reductase from Syntrophobacter fumaroxidans (strain DSM 10017 / MPOB).